Here is a 1198-residue protein sequence, read N- to C-terminus: Regulator of G-protein signaling 3 (1198 aa).

Residues 137–256 enclose the C2 domain; the sequence is GAGQLRLSID…TPDKEISGWY (120 aa). The PDZ domain occupies 299-376; that stretch reads KITIPRGKDG…EIILLVWRMV (78 aa). An Omega-N-methylarginine modification is found at Arg448. The tract at residues 669-933 is disordered; the sequence is QQLAASPPDS…GAEGGLSLRV (265 aa). The residue at position 674 (Ser674) is a Phosphoserine. A compositionally biased stretch (basic and acidic residues) spans 679–697; that stretch reads KMFETEADEKREMALEEGK. The segment covering 739–751 has biased composition (polar residues); that stretch reads EPLSSKDSATSEG. The span at 753 to 773 shows a compositional bias: pro residues; the sequence is PPGPDAPPSKDVPPCQEPPPA. Acidic residues predominate over residues 877–906; it reads GDEEDAEEAEEVEEGEEGEEDEDEDTSDDN. Positions 907 to 917 are enriched in basic and acidic residues; sequence YGERSEAKRSS. Phosphoserine is present on residues Ser943, Ser946, Ser978, and Ser1007. 2 disordered regions span residues 1007–1026 and 1032–1056; these read SGAD…KSKN and KNKL…ADKM. The RGS domain occupies 1073 to 1198; it reads SLEKLLVHKY…INQKKMSPPL (126 aa).

Binds EFNB1 and EFNB2. Binds the GNB1-GNG2 heterodimer. Phosphorylated by cyclic GMP-dependent protein kinase. Post-translationally, ISGylated.

It is found in the cytoplasm. The protein resides in the nucleus. Its subcellular location is the cell membrane. Down-regulates signaling from heterotrimeric G-proteins by increasing the GTPase activity of the alpha subunits, thereby driving them into their inactive GDP-bound form. Down-regulates G-protein-mediated release of inositol phosphates and activation of MAP kinases. This chain is Regulator of G-protein signaling 3 (RGS3), found in Homo sapiens (Human).